A 397-amino-acid polypeptide reads, in one-letter code: CCA-adding enzyme (397 aa).

Positions 26 and 29 each coordinate ATP. Positions 26 and 29 each coordinate CTP. 2 residues coordinate Mg(2+): Asp39 and Asp41. ATP is bound by residues Arg110, Asp153, Arg156, Arg159, and Arg162. The CTP site is built by Arg110, Asp153, Arg156, Arg159, and Arg162.

This sequence belongs to the tRNA nucleotidyltransferase/poly(A) polymerase family. Bacterial CCA-adding enzyme type 3 subfamily. In terms of assembly, homodimer. It depends on Mg(2+) as a cofactor.

It catalyses the reaction a tRNA precursor + 2 CTP + ATP = a tRNA with a 3' CCA end + 3 diphosphate. It carries out the reaction a tRNA with a 3' CCA end + 2 CTP + ATP = a tRNA with a 3' CCACCA end + 3 diphosphate. Catalyzes the addition and repair of the essential 3'-terminal CCA sequence in tRNAs without using a nucleic acid template. Adds these three nucleotides in the order of C, C, and A to the tRNA nucleotide-73, using CTP and ATP as substrates and producing inorganic pyrophosphate. tRNA 3'-terminal CCA addition is required both for tRNA processing and repair. Also involved in tRNA surveillance by mediating tandem CCA addition to generate a CCACCA at the 3' terminus of unstable tRNAs. While stable tRNAs receive only 3'-terminal CCA, unstable tRNAs are marked with CCACCA and rapidly degraded. This chain is CCA-adding enzyme, found in Bacillus mycoides (strain KBAB4) (Bacillus weihenstephanensis).